The primary structure comprises 582 residues: MSIETLLEAARFLEWQAQQQQRAREEQERLRLEQEREQEQKKANSLARLAHTLPVEEPRMEAPPLPLSPPAPPPAPPPPLATPAPLTVIPIPVVTNSPQPLPPPPPLPAAAQPLPLAPRQPALVGAPGLSIKEPAPLPSRPQVPTPAPLLPDSKATIPPNGSPKPLQPLPTPVLTIAPHPGVQPQLAPQQPPPPTLGTLKLAPAEEVKSSEQKKRPGGIGTREVHNKLEKNRRAHLKECFETLKRNIPNVDDKKTSNLSVLRTALRYIQSLKRKEKEYEHEMERLAREKIATQQRLAELKHELSQWMDVLEIDRVLRQTGQPEDDQASTSTASEGEDNIDEDMEEDRAGLGPPKLSHRPQPELLKSTLPPPSTTPAPLPPHPHPHPHSVALPPAHLPVQQQQPQQKTPLPAPPPPPAAPAQTLVPAPAHLVATAGGGSTVIAHTATTHASVIQTVNHVLQGPGGKHIAHIAPSAPSPAVQLAPATPPIGHITVHPATLNHVAHLGSQLPLYPQPVAVSHIAHTLSHQQVNGTAGLGPPATVMAKPAVGAQVVHHPQLVGQTVLNPVTMVTMPSFPVSTLKLA.

The residue at position 2 (serine 2) is an N-acetylserine. Positions 18 to 224 are disordered; sequence QQQQRAREEQ…RPGGIGTREV (207 aa). Positions 22–42 are enriched in basic and acidic residues; sequence RAREEQERLRLEQEREQEQKK. Pro residues-rich tracts occupy residues 61–82 and 99–108; these read EAPP…PLAT and QPLPPPPPLP. Low complexity predominate over residues 109–123; that stretch reads AAAQPLPLAPRQPAL. Composition is skewed to pro residues over residues 135 to 149 and 160 to 171; these read APLP…PAPL and NGSPKPLQPLPT. Basic and acidic residues predominate over residues 203–214; that stretch reads PAEEVKSSEQKK. In terms of domain architecture, bHLH spans 220–271; it reads GTREVHNKLEKNRRAHLKECFETLKRNIPNVDDKKTSNLSVLRTALRYIQSL. A leucine-zipper region spans residues 271–299; sequence LKRKEKEYEHEMERLAREKIATQQRLAEL. The tract at residues 319–422 is disordered; sequence TGQPEDDQAS…PPPPAAPAQT (104 aa). Acidic residues predominate over residues 334–345; that stretch reads EGEDNIDEDMEE. Pro residues predominate over residues 368 to 381; it reads LPPPSTTPAPLPPH. The segment covering 387-408 has biased composition (low complexity); sequence HSVALPPAHLPVQQQQPQQKTP. Positions 409 to 418 are enriched in pro residues; it reads LPAPPPPPAA.

As to quaternary structure, efficient DNA binding requires dimerization with another bHLH protein. Binds DNA as a homodimer or a heterodimer with MAX.

Its subcellular location is the nucleus. In terms of biological role, binds DNA as a heterodimer with MAX and represses transcription. Binds to the canonical E box sequence 5'-CACGTG-3' and, with higher affinity, to 5'-CACGCG-3'. The chain is Max-binding protein MNT (MNT) from Homo sapiens (Human).